The following is a 359-amino-acid chain: MTLESMIACCLSDEVKESKRINAEIEKQLRRDKRDARRELKLLLLGTGESGKSTFIKQMRIIHGAGYSEEDKRGFTKLVYQNIFTAMQAVVRAMDTLKIRYKYEQNKANALLIREVDVEKVTTFEHQYVNAIKTLWSDPGVQECYDRRREFQLSDSAKYYLTDVDRIATVGYLPTQQDVLRVRVPTTGIIEYPFDLENIIFRMVDVGGQRSERRKWIHCFENVTSIMFLVALSEYDQVLVESDNENRMEESKALFRTIITYPWFQHSSVILFLNKKDLLEDKILHSHLVDYFPEFDGPQRDAQAAREFILKMFVDLNPDSDKIIYSHFTCATDTENIRFVFAAVKDTILQLNLKEYNLV.

S-palmitoyl cysteine attachment occurs at residues cysteine 9 and cysteine 10. Positions 38 to 359 (RELKLLLLGT…QLNLKEYNLV (322 aa)) constitute a G-alpha domain. Residues 41 to 54 (KLLLLGTGESGKST) are G1 motif. GTP is bound by residues 46 to 53 (GTGESGKS) and 180 to 183 (LRVR). Residue serine 53 coordinates Mg(2+). Residues 178 to 186 (DVLRVRVPT) are G2 motif. A Mg(2+)-binding site is contributed by threonine 186. Residues 201–210 (FRMVDVGGQR) form a G3 motif region. The segment at 270-277 (ILFLNKKD) is G4 motif. GTP contacts are provided by residues 274 to 277 (NKKD) and alanine 331. A G5 motif region spans residues 329-334 (TCATDT).

Belongs to the G-alpha family. G(q) subfamily. G proteins are composed of 3 units; alpha, beta and gamma. The alpha chain contains the guanine nucleotide binding site. Interacts with RGS22. Interacts with NTSR1.

It localises to the cell membrane. It is found in the cytoplasm. The catalysed reaction is GTP + H2O = GDP + phosphate + H(+). Its function is as follows. Guanine nucleotide-binding proteins (G proteins) function as transducers downstream of G protein-coupled receptors (GPCRs) in numerous signaling cascades. The alpha chain contains the guanine nucleotide binding site and alternates between an active, GTP-bound state and an inactive, GDP-bound state. Signaling by an activated GPCR promotes GDP release and GTP binding. The alpha subunit has a low GTPase activity that converts bound GTP to GDP, thereby terminating the signal. Both GDP release and GTP hydrolysis are modulated by numerous regulatory proteins. Signaling is mediated via phospholipase C-beta-dependent inositol lipid hydrolysis for signal propagation: activates phospholipase C-beta: following GPCR activation, GNA11 activates PLC-beta (PLCB1, PLCB2, PLCB3 or PLCB4), leading to production of diacylglycerol (DAG) and inositol 1,4,5-trisphosphate (IP3). Transduces FFAR4 signaling in response to long-chain fatty acids (LCFAs). Together with GNAQ, required for heart development. In the respiratory epithelium, transmits OXGR1-dependent signals that lead to downstream intracellular Ca(2+) release and mucocilliary clearance of airborne pathogens. The protein is Guanine nucleotide-binding protein subunit alpha-11 (Gna11) of Rattus norvegicus (Rat).